A 303-amino-acid chain; its full sequence is UDP-N-acetylenolpyruvoylglucosamine reductase (303 aa).

The FAD-binding PCMH-type domain maps to 30 to 195; it reads KTGGPADLLA…LSARFEMAKG (166 aa). Residue Arg-174 is part of the active site. The Proton donor role is filled by Ser-224. Residue Glu-294 is part of the active site.

This sequence belongs to the MurB family. FAD serves as cofactor.

Its subcellular location is the cytoplasm. The enzyme catalyses UDP-N-acetyl-alpha-D-muramate + NADP(+) = UDP-N-acetyl-3-O-(1-carboxyvinyl)-alpha-D-glucosamine + NADPH + H(+). Its pathway is cell wall biogenesis; peptidoglycan biosynthesis. In terms of biological role, cell wall formation. This chain is UDP-N-acetylenolpyruvoylglucosamine reductase, found in Latilactobacillus sakei subsp. sakei (strain 23K) (Lactobacillus sakei subsp. sakei).